Consider the following 95-residue polypeptide: Aspartyl/glutamyl-tRNA(Asn/Gln) amidotransferase subunit C (95 aa).

Belongs to the GatC family. As to quaternary structure, heterotrimer of A, B and C subunits.

The catalysed reaction is L-glutamyl-tRNA(Gln) + L-glutamine + ATP + H2O = L-glutaminyl-tRNA(Gln) + L-glutamate + ADP + phosphate + H(+). The enzyme catalyses L-aspartyl-tRNA(Asn) + L-glutamine + ATP + H2O = L-asparaginyl-tRNA(Asn) + L-glutamate + ADP + phosphate + 2 H(+). Its function is as follows. Allows the formation of correctly charged Asn-tRNA(Asn) or Gln-tRNA(Gln) through the transamidation of misacylated Asp-tRNA(Asn) or Glu-tRNA(Gln) in organisms which lack either or both of asparaginyl-tRNA or glutaminyl-tRNA synthetases. The reaction takes place in the presence of glutamine and ATP through an activated phospho-Asp-tRNA(Asn) or phospho-Glu-tRNA(Gln). The polypeptide is Aspartyl/glutamyl-tRNA(Asn/Gln) amidotransferase subunit C (Geobacter metallireducens (strain ATCC 53774 / DSM 7210 / GS-15)).